The sequence spans 543 residues: Cobyric acid synthase (543 aa).

The region spanning Met260 to Phe483 is the GATase cobBQ-type domain. The active-site Nucleophile is the Cys346. Residue His475 is part of the active site.

It belongs to the CobB/CobQ family. CobQ subfamily.

It participates in cofactor biosynthesis; adenosylcobalamin biosynthesis. In terms of biological role, catalyzes amidations at positions B, D, E, and G on adenosylcobyrinic A,C-diamide. NH(2) groups are provided by glutamine, and one molecule of ATP is hydrogenolyzed for each amidation. In Nitratidesulfovibrio vulgaris (strain ATCC 29579 / DSM 644 / CCUG 34227 / NCIMB 8303 / VKM B-1760 / Hildenborough) (Desulfovibrio vulgaris), this protein is Cobyric acid synthase.